The chain runs to 672 residues: ABC transporter G family member 21 (672 aa).

Polar residues predominate over residues 1–35; that stretch reads MMPPNEQESSFPKTPSANRHETSPVQENRFSSPSH. The disordered stretch occupies residues 1 to 59; it reads MMPPNEQESSFPKTPSANRHETSPVQENRFSSPSHVNPCLDDDNDHDGPSHQSRQSSVL. A compositionally biased stretch (low complexity) spans 50 to 59; it reads SHQSRQSSVL. The 255-residue stretch at 68-322 folds into the ABC transporter domain; that stretch reads LKFEELTYSI…FGSIGYQPGS (255 aa). 117–124 provides a ligand contact to ATP; that stretch reads GPSGSGKT. Residues 411-617 form the ABC transmembrane type-2 domain; that stretch reads MQFSVLLKRG…CYKLLVGVQY (207 aa). Transmembrane regions (helical) follow at residues 429–449, 460–480, 512–532, 543–563, 576–596, and 649–669; these read FSGL…LLWW, VGLL…NAIF, LPME…MGGL, LMIV…LGAI, VLML…PGFI, and WDVL…YLAL.

This sequence belongs to the ABC transporter superfamily. ABCG family. Eye pigment precursor importer (TC 3.A.1.204) subfamily.

It is found in the membrane. The chain is ABC transporter G family member 21 (ABCG21) from Arabidopsis thaliana (Mouse-ear cress).